Reading from the N-terminus, the 424-residue chain is Acetyl-CoA acetyltransferase, mitochondrial (424 aa).

Residues 1–30 (MAALVALHGVVRRPLLRGLLQEVRCLERSY) constitute a mitochondrion transit peptide. Lys63 is subject to N6-acetyllysine; alternate. Lys63 carries the post-translational modification N6-succinyllysine; alternate. Lys75 is modified (N6-succinyllysine). Catalysis depends on Cys123, which acts as the Acyl-thioester intermediate. 4 positions are modified to N6-acetyllysine; alternate: Lys171, Lys178, Lys187, and Lys199. N6-succinyllysine; alternate is present on residues Lys171, Lys178, Lys187, and Lys199. At Ser204 the chain carries Phosphoserine. Tyr216 provides a ligand contact to CoA. Tyr216 provides a ligand contact to K(+). 2 positions are modified to N6-acetyllysine; alternate: Lys220 and Lys227. N6-succinyllysine; alternate occurs at positions 220 and 227. Lys240 carries the post-translational modification N6-succinyllysine. At Lys242 the chain carries N6-acetyllysine; alternate. Residue Lys242 is modified to N6-succinyllysine; alternate. 2 positions are modified to N6-acetyllysine: Lys248 and Lys254. CoA-binding positions include 255-257 (RVD) and Lys260. The residue at position 260 (Lys260) is an N6-acetyllysine; alternate. Residue Lys260 is modified to N6-succinyllysine; alternate. An N6-succinyllysine mark is found at Lys263 and Lys265. Lys270 is modified (N6-acetyllysine). K(+) contacts are provided by Ala277, Ala278, and Ala280. Ser281 serves as a coordination point for CoA. Lys335 is subject to N6-acetyllysine. Val378 serves as a coordination point for K(+). Cys410 functions as the Proton donor/acceptor in the catalytic mechanism.

This sequence belongs to the thiolase-like superfamily. Thiolase family. In terms of assembly, homotetramer. In terms of processing, succinylation at Lys-265, adjacent to a coenzyme A binding site. Desuccinylated by SIRT5.

The protein resides in the mitochondrion. It catalyses the reaction 2 acetyl-CoA = acetoacetyl-CoA + CoA. The enzyme catalyses propanoyl-CoA + acetyl-CoA = 2-methyl-3-oxobutanoyl-CoA + CoA. The protein operates within lipid metabolism; fatty acid beta-oxidation. Its activity is regulated as follows. Activated by potassium ions, but not sodium ions. Its function is as follows. This is one of the enzymes that catalyzes the last step of the mitochondrial beta-oxidation pathway, an aerobic process breaking down fatty acids into acetyl-CoA. Using free coenzyme A/CoA, catalyzes the thiolytic cleavage of medium- to long-chain 3-oxoacyl-CoAs into acetyl-CoA and a fatty acyl-CoA shortened by two carbon atoms. The activity of the enzyme is reversible and it can also catalyze the condensation of two acetyl-CoA molecules into acetoacetyl-CoA. Thereby, it plays a major role in ketone body metabolism. This is Acetyl-CoA acetyltransferase, mitochondrial (Acat1) from Mus musculus (Mouse).